A 278-amino-acid polypeptide reads, in one-letter code: 4-deoxy-L-threo-5-hexosulose-uronate ketol-isomerase (278 aa).

Residues His-196, His-198, Glu-203, and His-245 each coordinate Zn(2+).

The protein belongs to the KduI family. It depends on Zn(2+) as a cofactor.

It carries out the reaction 5-dehydro-4-deoxy-D-glucuronate = 3-deoxy-D-glycero-2,5-hexodiulosonate. It participates in glycan metabolism; pectin degradation; 2-dehydro-3-deoxy-D-gluconate from pectin: step 4/5. Catalyzes the isomerization of 5-dehydro-4-deoxy-D-glucuronate to 3-deoxy-D-glycero-2,5-hexodiulosonate. The chain is 4-deoxy-L-threo-5-hexosulose-uronate ketol-isomerase from Shigella flexneri.